The following is a 281-amino-acid chain: 4-deoxy-L-threo-5-hexosulose-uronate ketol-isomerase (281 aa).

Positions 198, 200, 205, and 248 each coordinate Zn(2+).

This sequence belongs to the KduI family. Zn(2+) serves as cofactor.

It carries out the reaction 5-dehydro-4-deoxy-D-glucuronate = 3-deoxy-D-glycero-2,5-hexodiulosonate. It participates in glycan metabolism; pectin degradation; 2-dehydro-3-deoxy-D-gluconate from pectin: step 4/5. In terms of biological role, catalyzes the isomerization of 5-dehydro-4-deoxy-D-glucuronate to 3-deoxy-D-glycero-2,5-hexodiulosonate. In Lacticaseibacillus paracasei (strain ATCC 334 / BCRC 17002 / CCUG 31169 / CIP 107868 / KCTC 3260 / NRRL B-441) (Lactobacillus paracasei), this protein is 4-deoxy-L-threo-5-hexosulose-uronate ketol-isomerase.